The primary structure comprises 330 residues: Aspartate--ammonia ligase (330 aa).

Belongs to the class-II aminoacyl-tRNA synthetase family. AsnA subfamily.

The protein localises to the cytoplasm. It catalyses the reaction L-aspartate + NH4(+) + ATP = L-asparagine + AMP + diphosphate + H(+). It functions in the pathway amino-acid biosynthesis; L-asparagine biosynthesis; L-asparagine from L-aspartate (ammonia route): step 1/1. This is Aspartate--ammonia ligase from Streptococcus pneumoniae serotype 19F (strain G54).